Here is an 89-residue protein sequence, read N- to C-terminus: Cell division topological specificity factor (89 aa).

The protein belongs to the MinE family.

Prevents the cell division inhibition by proteins MinC and MinD at internal division sites while permitting inhibition at polar sites. This ensures cell division at the proper site by restricting the formation of a division septum at the midpoint of the long axis of the cell. The chain is Cell division topological specificity factor from Laribacter hongkongensis (strain HLHK9).